A 145-amino-acid chain; its full sequence is Ribonuclease HI (145 aa).

The RNase H type-1 domain occupies 1–142 (MNQTVYLYTD…ADDLANRGAA (142 aa)). Positions 10, 48, 70, and 134 each coordinate Mg(2+).

This sequence belongs to the RNase H family. As to quaternary structure, monomer. The cofactor is Mg(2+).

It localises to the cytoplasm. It catalyses the reaction Endonucleolytic cleavage to 5'-phosphomonoester.. Its function is as follows. Endonuclease that specifically degrades the RNA of RNA-DNA hybrids. This Neisseria meningitidis serogroup B (strain ATCC BAA-335 / MC58) protein is Ribonuclease HI.